Here is a 451-residue protein sequence, read N- to C-terminus: F-box only protein 47 (451 aa).

Residues 41 to 91 (LGNFKVLPLEILHIILRYLSVKDIGMLSMVSKTVSQHIINYISTSSGSRRL) enclose the F-box domain.

In terms of assembly, part of a SCF (SKP1-cullin-F-box) protein ligase complex.

Functionally, probably recognizes and binds to some phosphorylated proteins and promotes their ubiquitination and degradation. This chain is F-box only protein 47 (Fbxo47), found in Mus musculus (Mouse).